Reading from the N-terminus, the 263-residue chain is Glycerol uptake facilitator protein (263 aa).

At 1 to 7 (MNIYRKK) the chain is on the cytoplasmic side. The chain crosses the membrane as a helical span at residues 8–36 (NIIKKCFMEFFGTGLVMFFGIGCLAASKL). Residues 37–41 (TNANF) lie on the Extracellular side of the membrane. A helical membrane pass occupies residues 42–62 (TQFEISCIWGFGVSIAIYFSS). Over 63-65 (SIS) the chain is Cytoplasmic. The stretch at 66-69 (GAHL) is an intramembrane region. Residues 70–72 (NPA) carry the NPA 1 motif. Residues 70–80 (NPAVTIFFWLS) constitute an intramembrane region (helical). Residues 81 to 86 (SKLNKR) are Cytoplasmic-facing. The helical transmembrane segment at 87–110 (KVLPYIISQTLGSFFFTMLTYYLY) threads the bilayer. Over 111 to 145 (NNLLISFERNNNVVRGTQESLNLASIFCVYPNYNN) the chain is Extracellular. The helical transmembrane segment at 146 to 171 (SFIYDFIIEIFSTALFILIVLEFNNR) threads the bilayer. Residues 172–181 (NSNYFLYNRS) are Cytoplasmic-facing. Residues 182–198 (VAPILTGFLVCMINLVI) traverse the membrane as a helical segment. Over 199–202 (NPLN) the chain is Extracellular. An intramembrane segment occupies 203–206 (NISL). Positions 207 to 209 (NPA) match the NPA 2 motif. Residues 207–220 (NPARDLGPKILLSL) constitute an intramembrane region (helical). At 221–236 (TGWGLFSFTGGNDNIL) the chain is on the extracellular side. The chain crosses the membrane as a helical span at residues 237–259 (YCFIPIMGPILGANLGGWIHKTL). Over 260–263 (INNS) the chain is Cytoplasmic.

The protein belongs to the MIP/aquaporin (TC 1.A.8) family.

The protein resides in the cell membrane. It catalyses the reaction glycerol(in) = glycerol(out). Mediates glycerol diffusion across the cytoplasmic membrane via a pore-type mechanism. The protein is Glycerol uptake facilitator protein (glpF) of Buchnera aphidicola subsp. Acyrthosiphon pisum (strain APS) (Acyrthosiphon pisum symbiotic bacterium).